The chain runs to 211 residues: Glycerol-3-phosphate acyltransferase 2 (211 aa).

5 helical membrane passes run F6–G26, I57–F77, H82–L102, F124–L144, and I148–I168.

This sequence belongs to the PlsY family. As to quaternary structure, probably interacts with PlsX.

The protein resides in the cell membrane. The enzyme catalyses an acyl phosphate + sn-glycerol 3-phosphate = a 1-acyl-sn-glycero-3-phosphate + phosphate. The protein operates within lipid metabolism; phospholipid metabolism. Its function is as follows. Catalyzes the transfer of an acyl group from acyl-phosphate (acyl-PO(4)) to glycerol-3-phosphate (G3P) to form lysophosphatidic acid (LPA). This enzyme utilizes acyl-phosphate as fatty acyl donor, but not acyl-CoA or acyl-ACP. In Lactobacillus acidophilus (strain ATCC 700396 / NCK56 / N2 / NCFM), this protein is Glycerol-3-phosphate acyltransferase 2.